The primary structure comprises 164 residues: SsrA-binding protein (164 aa).

This sequence belongs to the SmpB family.

The protein resides in the cytoplasm. Required for rescue of stalled ribosomes mediated by trans-translation. Binds to transfer-messenger RNA (tmRNA), required for stable association of tmRNA with ribosomes. tmRNA and SmpB together mimic tRNA shape, replacing the anticodon stem-loop with SmpB. tmRNA is encoded by the ssrA gene; the 2 termini fold to resemble tRNA(Ala) and it encodes a 'tag peptide', a short internal open reading frame. During trans-translation Ala-aminoacylated tmRNA acts like a tRNA, entering the A-site of stalled ribosomes, displacing the stalled mRNA. The ribosome then switches to translate the ORF on the tmRNA; the nascent peptide is terminated with the 'tag peptide' encoded by the tmRNA and targeted for degradation. The ribosome is freed to recommence translation, which seems to be the essential function of trans-translation. This Corynebacterium efficiens (strain DSM 44549 / YS-314 / AJ 12310 / JCM 11189 / NBRC 100395) protein is SsrA-binding protein.